The sequence spans 351 residues: Histidinol-phosphate aminotransferase (351 aa).

At K221 the chain carries N6-(pyridoxal phosphate)lysine.

Belongs to the class-II pyridoxal-phosphate-dependent aminotransferase family. Histidinol-phosphate aminotransferase subfamily. As to quaternary structure, homodimer. Requires pyridoxal 5'-phosphate as cofactor.

The enzyme catalyses L-histidinol phosphate + 2-oxoglutarate = 3-(imidazol-4-yl)-2-oxopropyl phosphate + L-glutamate. The protein operates within amino-acid biosynthesis; L-histidine biosynthesis; L-histidine from 5-phospho-alpha-D-ribose 1-diphosphate: step 7/9. In Staphylococcus epidermidis (strain ATCC 35984 / DSM 28319 / BCRC 17069 / CCUG 31568 / BM 3577 / RP62A), this protein is Histidinol-phosphate aminotransferase.